The primary structure comprises 120 residues: Seripauperin-13 (120 aa).

A signal peptide spans Met-1–Ala-25.

It belongs to the SRP1/TIP1 family. Seripauperin subfamily.

The polypeptide is Seripauperin-13 (PAU13) (Saccharomyces cerevisiae (strain ATCC 204508 / S288c) (Baker's yeast)).